We begin with the raw amino-acid sequence, 448 residues long: uncharacterized protein (448 aa).

The segment covering 187–198 has biased composition (basic and acidic residues); that stretch reads SKGDRGDADDRG. Disordered regions lie at residues 187–221, 243–270, and 291–361; these read SKGDRGDADDRGPASVGSGGAPARGAGQQPELPTR, LQVPGGTSAAIPSASSTPSLPNLGGATM, and LSGL…LPNG. Positions 243–261 are enriched in low complexity; sequence LQVPGGTSAAIPSASSTPS. The segment covering 307 to 334 has biased composition (basic and acidic residues); it reads FDERGQEVRDPADYEHANEPDERRADDR.

This sequence to M.tuberculosis Rv0025 and Rv0739.

This is an uncharacterized protein from Mycobacterium tuberculosis (strain CDC 1551 / Oshkosh).